The sequence spans 250 residues: Osmotin-like protein OSML15 (250 aa).

A signal peptide spans methionine 1–alanine 21. Cystine bridges form between cysteine 31–cysteine 226, cysteine 73–cysteine 83, cysteine 88–cysteine 94, cysteine 142–cysteine 214, cysteine 147–cysteine 197, cysteine 155–cysteine 165, cysteine 169–cysteine 178, and cysteine 179–cysteine 184.

Belongs to the thaumatin family.

The sequence is that of Osmotin-like protein OSML15 from Solanum commersonii (Commerson's wild potato).